The following is a 527-amino-acid chain: tRNA pseudouridine synthase Pus10 (527 aa).

2 residues coordinate Zn(2+): Cys-21 and Cys-24. A coiled-coil region spans residues 42–87; that stretch reads KELLNELQKFLEPEKPELILEAPNPPLKKIRLHEDGIDNLSEDGKE. Phosphoserine is present on Ser-82. The Zn(2+) site is built by Cys-107 and Cys-110. The interval 302-315 is RNA binding forefinger loop; the sequence is TPWIIDGERKMESS. Asp-342 functions as the Nucleophile in the catalytic mechanism. Residues 440 to 455 are RNA binding thumb loop; the sequence is QKTPLRVLHRRPLAVR.

This sequence belongs to the pseudouridine synthase Pus10 family. As to quaternary structure, interacts with components of the microprocessor complex DROSHA and DGCR8. In terms of processing, proteolytically cleaved during TRAIL-induced cell death. Cleaved, in vitro, either by caspase-3 (CASP3) or caspase-8 (CASP8).

The protein resides in the nucleus. Its subcellular location is the cytoplasm. It is found in the mitochondrion. It catalyses the reaction uridine(55) in tRNA = pseudouridine(55) in tRNA. The catalysed reaction is uridine(54) in tRNA = pseudouridine(54) in tRNA. In terms of biological role, protein with different functions depending on its subcellular location: involved in miRNA processing in the nucleus and acts as a tRNA pseudouridylate synthase in the cytoplasm. In the cytoplasm, acts as a pseudouridylate synthase by catalyzing synthesis of pseudouridine(54) and pseudouridine(55) from uracil-54 and uracil-55, respectively, in the psi GC loop of a subset of tRNAs. tRNA pseudouridylate synthase activity is enhanced by the presence of 1-methyladenosine at position 53-61 of tRNAs. Does not show tRNA pseudouridylate synthase activity in the nucleus. In the nucleus, promotes primary microRNAs (pri-miRNAs) processing independently of its RNA pseudouridylate synthase activity. Binds pri-miRNAs. Modulator of TRAIL/TNFSF10-induced cell death via activation of procaspase-8 and BID cleavage. Required for the progression of the apoptotic signal through intrinsic mitochondrial cell death. This Mus musculus (Mouse) protein is tRNA pseudouridine synthase Pus10.